The primary structure comprises 1057 residues: Carbamoyl phosphate synthase large chain (1057 aa).

The interval 1-401 is carboxyphosphate synthetic domain; the sequence is MPKRNDIKTI…SLLKAIRSLE (401 aa). The ATP site is built by Arg129, Arg169, Gly175, Gly176, Lys208, Ile210, Glu215, Gly241, Ile242, His243, Gln284, and Glu298. The ATP-grasp 1 domain occupies 133 to 327; it reads RNLMNELNEP…IAKLAAKIAV (195 aa). Mg(2+) is bound by residues Gln284, Glu298, and Asn300. 3 residues coordinate Mn(2+): Gln284, Glu298, and Asn300. Residues 402–546 form an oligomerization domain region; that stretch reads YGVHHLGLPN…YGTYETENES (145 aa). Residues 547 to 929 form a carbamoyl phosphate synthetic domain region; it reads IRSDKKKVVV…ALYKGLVASG (383 aa). One can recognise an ATP-grasp 2 domain in the interval 671-861; sequence EALMQRIEIP…MANLAMKAIL (191 aa). 10 residues coordinate ATP: Arg707, Arg746, Leu748, Glu752, Gly777, Val778, His779, Ser780, Gln820, and Glu832. Gln820, Glu832, and Asn834 together coordinate Mg(2+). Mn(2+) contacts are provided by Gln820, Glu832, and Asn834. Residues 930-1057 form the MGS-like domain; sequence LQVKDHGTVL…ESMTFNMNQM (128 aa). The allosteric domain stretch occupies residues 930–1057; that stretch reads LQVKDHGTVL…ESMTFNMNQM (128 aa).

The protein belongs to the CarB family. As to quaternary structure, composed of two chains; the small (or glutamine) chain promotes the hydrolysis of glutamine to ammonia, which is used by the large (or ammonia) chain to synthesize carbamoyl phosphate. Tetramer of heterodimers (alpha,beta)4. Mg(2+) serves as cofactor. The cofactor is Mn(2+).

It catalyses the reaction hydrogencarbonate + L-glutamine + 2 ATP + H2O = carbamoyl phosphate + L-glutamate + 2 ADP + phosphate + 2 H(+). The enzyme catalyses hydrogencarbonate + NH4(+) + 2 ATP = carbamoyl phosphate + 2 ADP + phosphate + 2 H(+). Its pathway is amino-acid biosynthesis; L-arginine biosynthesis; carbamoyl phosphate from bicarbonate: step 1/1. It functions in the pathway pyrimidine metabolism; UMP biosynthesis via de novo pathway; (S)-dihydroorotate from bicarbonate: step 1/3. Functionally, large subunit of the glutamine-dependent carbamoyl phosphate synthetase (CPSase). CPSase catalyzes the formation of carbamoyl phosphate from the ammonia moiety of glutamine, carbonate, and phosphate donated by ATP, constituting the first step of 2 biosynthetic pathways, one leading to arginine and/or urea and the other to pyrimidine nucleotides. The large subunit (synthetase) binds the substrates ammonia (free or transferred from glutamine from the small subunit), hydrogencarbonate and ATP and carries out an ATP-coupled ligase reaction, activating hydrogencarbonate by forming carboxy phosphate which reacts with ammonia to form carbamoyl phosphate. This is Carbamoyl phosphate synthase large chain from Macrococcus caseolyticus (strain JCSC5402) (Macrococcoides caseolyticum).